The following is a 152-amino-acid chain: Prostaglandin E synthase (152 aa).

The Lumenal portion of the chain corresponds to 1 to 12; that stretch reads MPAHSLAMSSPA. A helical membrane pass occupies residues 13–41; it reads LPAFLLCSTLLVIKMYVVAIITGQVRLRK. A glutathione-binding site is contributed by R38. The Cytoplasmic segment spans residues 42–60; the sequence is KAFANPEDALRHGGPQYCR. The chain crosses the membrane as a helical span at residues 61–90; sequence SDPDVERCLRAHRNDMETIYPFLFLGFVYS. 73–77 is a glutathione binding site; it reads RNDME. Topologically, residues 91–95 are lumenal; that stretch reads FLGPN. The chain crosses the membrane as a helical span at residues 96-119; sequence PFVAWMHFLVFLLGRVVHTVAYLG. Glutathione contacts are provided by H113 and Y117. The Cytoplasmic portion of the chain corresponds to 120–123; that stretch reads KLRA. A helical transmembrane segment spans residues 124–152; it reads PIRSVTYTLAQLPCASMALQILWEAARHL. Glutathione is bound at residue 126–130; it reads RSVTY.

The protein belongs to the MAPEG family. Homotrimer. It depends on glutathione as a cofactor.

Its subcellular location is the membrane. It localises to the cytoplasm. The protein localises to the perinuclear region. It catalyses the reaction prostaglandin H2 = prostaglandin E2. The enzyme catalyses 2-glyceryl-prostaglandin H2 = 2-glyceryl-prostaglandin E2. It carries out the reaction prostaglandin G2 = (15S)-15-hydroperoxy-prostaglandin E2. The catalysed reaction is 1-chloro-2,4-dinitrobenzene + glutathione = 2,4-dinitrophenyl-S-glutathione + chloride + H(+). It catalyses the reaction (5S)-hydroperoxy-(6E,8Z,11Z,14Z)-eicosatetraenoate + 2 glutathione = (5S)-hydroxy-(6E,8Z,11Z,14Z)-eicosatetraenoate + glutathione disulfide + H2O. It functions in the pathway lipid metabolism; prostaglandin biosynthesis. Its function is as follows. Terminal enzyme of the cyclooxygenase (COX)-2-mediated prostaglandin E2 (PGE2) biosynthetic pathway. Catalyzes the glutathione-dependent oxidoreduction of prostaglandin endoperoxide H2 (PGH2) to prostaglandin E2 (PGE2) in response to inflammatory stimuli. Plays a key role in inflammation response, fever and pain. Also catalyzes the oxidoreduction of endocannabinoids into prostaglandin glycerol esters and PGG2 into 15-hydroperoxy-PGE2. In addition, displays low glutathione transferase and glutathione-dependent peroxidase activities, toward 1-chloro-2,4-dinitrobenzene and 5-hydroperoxyicosatetraenoic acid (5-HPETE), respectively. In Macaca fascicularis (Crab-eating macaque), this protein is Prostaglandin E synthase (PTGES).